Reading from the N-terminus, the 304-residue chain is MKGKEEKEGGARLGTGGGGSPDKSPSAQELKEQGNRLFVGRKYPEAAACYGRAITRNPLVAVYYTNRALCYLKMQQPEQALADCRRALELDGQSVKAHFFLGQCQLEMESYDEAIANLQRAYSLAKEQRLNFGDDIPSALRIAKKKRWNSIEERRIHQESELHSYLTRLIAAERERELEECQRNHEGDEDDGHIRAQQACIEAKHDKYMADMNELFSQVDEKRKKRDIPDYLCGKISFELMREPCITPSGITYDRKDIEEHLQRVGHFDPVTRSPLTQEQLIPNLAMKEVIDAFISENGWVEDY.

Over residues 1–10 the composition is skewed to basic and acidic residues; it reads MKGKEEKEGG. Residues 1–30 are disordered; sequence MKGKEEKEGGARLGTGGGGSPDKSPSAQEL. Lysine 2 is covalently cross-linked (Glycyl lysine isopeptide (Lys-Gly) (interchain with G-Cter in ubiquitin)). Residues 11–20 are compositionally biased toward gly residues; the sequence is ARLGTGGGGS. Phosphoserine is present on serine 20. A Glycyl lysine isopeptide (Lys-Gly) (interchain with G-Cter in ubiquitin) cross-link involves residue lysine 23. Residues serine 24 and serine 26 each carry the phosphoserine modification. TPR repeat units lie at residues 27-60, 61-94, and 96-128; these read AQELKEQGNRLFVGRKYPEAAACYGRAITRNPLV, AVYYTNRALCYLKMQQPEQALADCRRALELDGQS, and KAHFFLGQCQLEMESYDEAIANLQRAYSLAKEQ. Residues 102 to 201 are required for interaction with MAPK7; sequence GQCQLEMESY…GHIRAQQACI (100 aa). A required for interaction with and ubiquitination of MYOCD region spans residues 143 to 197; that stretch reads AKKKRWNSIEERRIHQESELHSYLTRLIAAERERELEECQRNHEGDEDDGHIRAQ. The tract at residues 144 to 198 is required for interaction with FOXO1; sequence KKKRWNSIEERRIHQESELHSYLTRLIAAERERELEECQRNHEGDEDDGHIRAQQ. Positions 144-304 are required for ubiquitination of FOXO1; sequence KKKRWNSIEE…ISENGWVEDY (161 aa). A Phosphoserine modification is found at serine 150. Residues lysine 222 and lysine 256 each participate in a glycyl lysine isopeptide (Lys-Gly) (interchain with G-Cter in ubiquitin) cross-link. The U-box domain maps to 227 to 301; sequence DIPDYLCGKI…DAFISENGWV (75 aa). The residue at position 274 (serine 274) is a Phosphoserine.

Homodimer. Interacts with BAG2, and with the E2 ubiquitin conjugating enzymes UBE2D1, UBE2D2 and UBE2D3. Detected in a ternary complex containing STUB1, HSPA1A and HSPBP1. Part of a complex composed of STUB1/CHIP, VCP/p97, CHRNA3, and UBXN2A that modulates the ubiquitination and endoplasmic reticulum-associated degradation (ERAD) of CHRNA3. Within the complex UBXN2A acts as a scaffold protein required for the interaction of CHRNA3 with VCP/p97, this interaction also inhibits CHRNA3 ubiquitination by STUB1/CHIP and subsequently ERAD. Interacts with MKKS. Interacts with DNAAF4. Interacts (via the U-box domain) with the UBE2V2-UBE2N heterodimer; the complex has a specific 'Lys-63'-linked polyubiquitination activity. Interacts (when monoubiquitinated) with ATXN3. Interacts with UBE2W. Interacts with DNAJB6. Interacts with FLCN and HSP90AA1. Interacts with HSP90. Interacts with UBE2N and UBE2V1. Interacts (via TPR repeats) with HSPA8 (via C-terminus). Interacts (via TPR repeats) with HSPA1A (via C-terminus). Interacts with the non-acetylated form of HSPA1A and HSPA1B. Interacts with SMAD3 and HSP90AB1. Interacts with UBE4B. Interacts with PRMT5. Interacts with MYOCD (via C-terminus). Interacts with FOXO1 (when phosphorylated on 'Ser-250'). Interacts with MAPK7/ERK5; the interaction is enhanced in the presence of IGF1 or MAP2K5 and promotes STUB1/CHIP E3 ligase activity. Interacts with and ubiquitinates ESR1; the interaction is promoted in the absence of estradiol (17-beta-estradiol/E2). Interacts with ESR2. Interacts with and ubiquitinates NFATC3; HSPA1A/HSP70 is required as a co-chaperone. In macrophages, interacts with PAQR3; the interaction promotes PPARG poylubiquitination and STUB1-mediated degradation. Component of the chaperone-assisted selective autophagy (CASA) complex consisting of BAG3, HSPA8/HSC70, HSPB8 and STUB1/CHIP. Post-translationally, auto-ubiquitinated; mediated by UBE2D1 and UBE2D2 and enhanced in the presence of MAP2K5. Monoubiquitinated at Lys-2 following cell stress by UBE2W, promoting the interaction with ATXN3. Expressed in the adventitia layer of the carotid artery (at protein level). Expressed in the CA1 region of the hippocampus (at protein level). Expressed in the uterus (at protein level).

Its subcellular location is the cytoplasm. The protein resides in the nucleus. The protein localises to the mitochondrion. The enzyme catalyses S-ubiquitinyl-[E2 ubiquitin-conjugating enzyme]-L-cysteine + [acceptor protein]-L-lysine = [E2 ubiquitin-conjugating enzyme]-L-cysteine + N(6)-ubiquitinyl-[acceptor protein]-L-lysine.. The protein operates within protein modification; protein ubiquitination. Functionally, E3 ubiquitin-protein ligase which targets misfolded chaperone substrates towards proteasomal degradation. Plays a role in the maintenance of mitochondrial morphology and promotes mitophagic removal of dysfunctional mitochondria; thereby acts as a protector against apoptosis in response to cellular stress. Negatively regulates vascular smooth muscle contraction, via degradation of the transcriptional activator MYOCD and subsequent loss of transcription of genes involved in vascular smooth muscle contraction. Promotes survival and proliferation of cardiac smooth muscle cells via ubiquitination and degradation of FOXO1, resulting in subsequent repression of FOXO1-mediated transcription of pro-apoptotic genes. Ubiquitinates ICER-type isoforms of CREM and targets them for proteasomal degradation, thereby acts as a positive effector of MAPK/ERK-mediated inhibition of apoptosis in cardiomyocytes. Inhibits lipopolysaccharide-induced apoptosis and hypertrophy in cardiomyocytes, via ubiquitination and subsequent proteasomal degradation of NFATC3. Collaborates with ATXN3 in the degradation of misfolded chaperone substrates: ATXN3 restricting the length of ubiquitin chain attached to STUB1/CHIP substrates and preventing further chain extension. Ubiquitinates NOS1 in concert with Hsp70 and Hsp40. Modulates the activity of several chaperone complexes, including Hsp70, Hsc70 and Hsp90. Ubiquitinates CHRNA3 targeting it for endoplasmic reticulum-associated degradation in cortical neurons, as part of the STUB1-VCP-UBXN2A complex. Ubiquitinates and promotes ESR1 proteasomal degradation in response to age-related circulating estradiol (17-beta-estradiol/E2) decline, thereby promotes neuronal apoptosis in response to ischemic reperfusion injury. Mediates transfer of non-canonical short ubiquitin chains to HSPA8 that have no effect on HSPA8 degradation. Mediates polyubiquitination of DNA polymerase beta (POLB) at 'Lys-41', 'Lys-61' and 'Lys-81', thereby playing a role in base-excision repair: catalyzes polyubiquitination by amplifying the HUWE1/ARF-BP1-dependent monoubiquitination and leading to POLB-degradation by the proteasome. Mediates polyubiquitination of CYP3A4. Ubiquitinates EPHA2 and may regulate the receptor stability and activity through proteasomal degradation. Acts as a co-chaperone for HSPA1A and HSPA1B chaperone proteins and promotes ubiquitin-mediated protein degradation. Negatively regulates the suppressive function of regulatory T-cells (Treg) during inflammation by mediating the ubiquitination and degradation of FOXP3 in a HSPA1A/B-dependent manner. Catalyzes monoubiquitination of SIRT6, preventing its degradation by the proteasome. Likely mediates polyubiquitination and down-regulates plasma membrane expression of PD-L1/CD274, an immune inhibitory ligand critical for immune tolerance to self and antitumor immunity. Negatively regulates TGF-beta signaling by modulating the basal level of SMAD3 via ubiquitin-mediated degradation. Plays a role in the degradation of TP53. Mediates ubiquitination of RIPK3 leading to its subsequent proteasome-dependent degradation. May regulate myosin assembly in striated muscles together with UBE4B and VCP/p97 by targeting myosin chaperone UNC45B for proteasomal degradation. Ubiquitinates PPARG in macrophages playing a role in M2 macrophages polarization and angiogenesis. The chain is E3 ubiquitin-protein ligase CHIP from Rattus norvegicus (Rat).